We begin with the raw amino-acid sequence, 366 residues long: MYGILVLEDGTIIRGDGFGAETEVLGELVFNTSMTGYVEILTDPSYKGQIVTMTYPLEGNYGVEKEWFESDGIKAEGFVVKDMTGSKLDEFLKEYNIPGISGVDTRYITRKIRSKGVIRSLLKTSTNPITKDEETELIKKVVEYPDISEIDLVPEVSTKETVIYNAEDEKTRCVLIDCGVKQSIIDCLVERGCSVVKVPYNSKEEEIMSYNPDFVLVSNGPGDPENMAETVETVKNLIGTLPVTGICLGHQLITIALGGKTYKLKFGHRGGNQPVKDIDSGKVYITSQNHGFATDDKIVPEGSELMHMNLNDDTVEGIRKIESNDLKNTVWSVQYHPEAGPGPHDARFLFDEMVELGIKFKAEKAN.

A CPSase region spans residues methionine 1–aspartate 168. 3 residues coordinate L-glutamine: serine 45, glycine 220, and glycine 222. One can recognise a Glutamine amidotransferase type-1 domain in the interval arginine 172 to glutamate 363. Cysteine 247 acts as the Nucleophile in catalysis. Positions 248, 251, 289, 291, and 292 each coordinate L-glutamine. Residues histidine 336 and glutamate 338 contribute to the active site.

Belongs to the CarA family. In terms of assembly, composed of two chains; the small (or glutamine) chain promotes the hydrolysis of glutamine to ammonia, which is used by the large (or ammonia) chain to synthesize carbamoyl phosphate. Tetramer of heterodimers (alpha,beta)4.

It catalyses the reaction hydrogencarbonate + L-glutamine + 2 ATP + H2O = carbamoyl phosphate + L-glutamate + 2 ADP + phosphate + 2 H(+). The enzyme catalyses L-glutamine + H2O = L-glutamate + NH4(+). The protein operates within amino-acid biosynthesis; L-arginine biosynthesis; carbamoyl phosphate from bicarbonate: step 1/1. It participates in pyrimidine metabolism; UMP biosynthesis via de novo pathway; (S)-dihydroorotate from bicarbonate: step 1/3. Its function is as follows. Small subunit of the glutamine-dependent carbamoyl phosphate synthetase (CPSase). CPSase catalyzes the formation of carbamoyl phosphate from the ammonia moiety of glutamine, carbonate, and phosphate donated by ATP, constituting the first step of 2 biosynthetic pathways, one leading to arginine and/or urea and the other to pyrimidine nucleotides. The small subunit (glutamine amidotransferase) binds and cleaves glutamine to supply the large subunit with the substrate ammonia. The polypeptide is Carbamoyl phosphate synthase small chain (Methanococcus maripaludis (strain C5 / ATCC BAA-1333)).